The chain runs to 439 residues: Transmembrane protease serine 11F (439 aa).

Residues 1 to 33 (MMYAPVEFSQTAYPRIEYQRRQQQFWDPIRLAL) lie on the Cytoplasmic side of the membrane. A helical; Signal-anchor for type II membrane protein membrane pass occupies residues 34–54 (FTLAIVAIVGITIGIVTHFVV). Over 55 to 439 (EDDKSFYYLA…RDWIASKTGL (385 aa)) the chain is Extracellular. The region spanning 58 to 176 (KSFYYLASFQ…PSFSLTPIDS (119 aa)) is the SEA domain. In terms of domain architecture, Peptidase S1 spans 207-438 (IVQGRETAME…YRDWIASKTG (232 aa)). An intrachain disulfide couples C234 to C250. Catalysis depends on charge relay system residues H249 and D294. 2 disulfide bridges follow: C359/C375 and C386/C414. S390 (charge relay system) is an active-site residue.

It belongs to the peptidase S1 family.

It localises to the membrane. In terms of biological role, probable serine protease. This Mus musculus (Mouse) protein is Transmembrane protease serine 11F (Tmprss11f).